The primary structure comprises 395 residues: Obg-like ATPase 1 (395 aa).

The OBG-type G domain maps to 22 to 280; it reads LKVGILGLPN…MPEDERQKYL (259 aa). 31-36 contributes to the ATP binding site; that stretch reads NVGKST. Ser-35 and Thr-55 together coordinate Mg(2+). Leu-228 contacts ATP. Positions 301–384 constitute a TGS domain; it reads QLEYFFTSGE…QDGDVIFFKF (84 aa).

This sequence belongs to the TRAFAC class OBG-HflX-like GTPase superfamily. OBG GTPase family. YchF/OLA1 subfamily. In terms of assembly, monomer. Requires Mg(2+) as cofactor. In terms of tissue distribution, expressed in the nervous system, pharyngeal muscles and intestine (at protein level).

It is found in the cytoplasm. In terms of biological role, hydrolyzes ATP, and can also hydrolyze GTP with lower efficiency. Has lower affinity for GTP. Plays a role in regulating starvation-induced thermotaxis responses in AFD thermosensory neurons. This is Obg-like ATPase 1 from Caenorhabditis elegans.